Here is a 595-residue protein sequence, read N- to C-terminus: Probable Xaa-Pro aminopeptidase CHGG_02942 (595 aa).

The segment at 51 to 76 is disordered; that stretch reads KSGPSSSNLSPSTLSTEKTSSDSSGV. Residues 52–66 are compositionally biased toward low complexity; it reads SGPSSSNLSPSTLST. The Mn(2+) site is built by aspartate 334, aspartate 345, glutamate 541, and glutamate 563.

Belongs to the peptidase M24B family. It depends on Mn(2+) as a cofactor.

It carries out the reaction Release of any N-terminal amino acid, including proline, that is linked to proline, even from a dipeptide or tripeptide.. Catalyzes the removal of a penultimate prolyl residue from the N-termini of peptides. This is Probable Xaa-Pro aminopeptidase CHGG_02942 from Chaetomium globosum (strain ATCC 6205 / CBS 148.51 / DSM 1962 / NBRC 6347 / NRRL 1970) (Soil fungus).